Reading from the N-terminus, the 433-residue chain is Enolase (433 aa).

S1 is subject to N-acetylserine. Residues S36 and H157 each coordinate (2R)-2-phosphoglycerate. E209 acts as the Proton donor in catalysis. D244, E294, and D319 together coordinate Mn(2+). (2R)-2-phosphoglycerate is bound by residues K344, R373, and S374. K344 (proton acceptor) is an active-site residue.

Belongs to the enolase family. Homodimer. Mg(2+) serves as cofactor.

It is found in the cytoplasm. It catalyses the reaction (2R)-2-phosphoglycerate = phosphoenolpyruvate + H2O. It participates in carbohydrate degradation; glycolysis; pyruvate from D-glyceraldehyde 3-phosphate: step 4/5. Its activity is regulated as follows. Inhibited by 2-phosphoglycolic acid. The chain is Enolase from Homarus gammarus (European lobster).